The following is a 208-amino-acid chain: Pyridoxal 5'-phosphate synthase subunit PdxT (208 aa).

46–48 (GES) is an L-glutamine binding site. The active-site Nucleophile is Cys-78. Residues Arg-105 and 156-157 (IR) contribute to the L-glutamine site. Residues His-192 and Glu-194 each act as charge relay system in the active site.

This sequence belongs to the glutaminase PdxT/SNO family. In the presence of PdxS, forms a dodecamer of heterodimers. Only shows activity in the heterodimer.

It carries out the reaction aldehydo-D-ribose 5-phosphate + D-glyceraldehyde 3-phosphate + L-glutamine = pyridoxal 5'-phosphate + L-glutamate + phosphate + 3 H2O + H(+). The catalysed reaction is L-glutamine + H2O = L-glutamate + NH4(+). Its pathway is cofactor biosynthesis; pyridoxal 5'-phosphate biosynthesis. Catalyzes the hydrolysis of glutamine to glutamate and ammonia as part of the biosynthesis of pyridoxal 5'-phosphate. The resulting ammonia molecule is channeled to the active site of PdxS. This chain is Pyridoxal 5'-phosphate synthase subunit PdxT, found in Bifidobacterium adolescentis (strain ATCC 15703 / DSM 20083 / NCTC 11814 / E194a).